Consider the following 61-residue polypeptide: Odorranain-A6 (61 aa).

An N-terminal signal peptide occupies residues 1 to 22 (MFSMKKSLLLLFFLGTISLSLC). A propeptide spanning residues 23–45 (EQERDAEEEEGSENGAEDIKINR) is cleaved from the precursor.

This sequence belongs to the frog skin active peptide (FSAP) family. Brevinin subfamily. Expressed by the skin glands.

It is found in the secreted. This chain is Odorranain-A6, found in Odorrana hainanensis (Odor frog).